A 140-amino-acid chain; its full sequence is uncharacterized protein (140 aa).

A compositionally biased stretch (polar residues) spans 1-19; it reads MGLCGSKTQPMPSQTTTVA. Residues 1–140 are disordered; sequence MGLCGSKTQP…ERERENMIYD (140 aa). The N-myristoyl glycine moiety is linked to residue Gly2. Cys4 carries the S-palmitoyl cysteine lipid modification. The span at 27–40 shows a compositional bias: basic and acidic residues; the sequence is INRDTVKSKQELRH. Basic residues predominate over residues 41–51; that stretch reads KEKKDKKKKTQ. The segment covering 73 to 140 has biased composition (basic and acidic residues); the sequence is DPSKNKVSPK…ERERENMIYD (68 aa).

This sequence to S.pombe new13. Myristoylated. In terms of processing, the N-myristoylated protein is further palmitoylated by ERF2, PFA4 and slightly by PFA5, but not by PFA3.

It localises to the cytoplasm. The protein resides in the cytosol. This is an uncharacterized protein from Saccharomyces cerevisiae (strain ATCC 204508 / S288c) (Baker's yeast).